Reading from the N-terminus, the 422-residue chain is SH2 domain-containing protein 4A (422 aa).

Phosphoserine is present on residues Ser117 and Ser123. Disordered regions lie at residues 141 to 190 (PQNV…EDEK) and 202 to 282 (SEWQ…VIRT). Composition is skewed to basic and acidic residues over residues 163–190 (TKKDDKAQTKDLTKKKDSEELKQTEDEK) and 212–231 (KAADEKRRSLAKQAREDYKR). The residue at position 233 (Ser233) is a Phosphoserine. The region spanning 316 to 408 (WFHGILTLKK…LGKELLLFPC (93 aa)) is the SH2 domain.

As to quaternary structure, interacts with ESR1.

It localises to the cytoplasm. Functionally, inhibits estrogen-induced cell proliferation by competing with PLCG for binding to ESR1, blocking the effect of estrogen on PLCG and repressing estrogen-induced proliferation. May play a role in T-cell development and function. The protein is SH2 domain-containing protein 4A (Sh2d4a) of Rattus norvegicus (Rat).